The following is a 352-amino-acid chain: (2E,6E)-farnesyl diphosphate synthase (352 aa).

The isopentenyl diphosphate site is built by K43, R46, and H77. Mg(2+) contacts are provided by D84 and D88. A DDXXD motif motif is present at residues 84-88; the sequence is DDLID. R94 provides a ligand contact to isopentenyl diphosphate. Residues 236–240 carry the DDXXD motif motif; the sequence is DDVLG.

It belongs to the FPP/GGPP synthase family. Mg(2+) serves as cofactor.

The enzyme catalyses isopentenyl diphosphate + dimethylallyl diphosphate = (2E)-geranyl diphosphate + diphosphate. The catalysed reaction is isopentenyl diphosphate + (2E)-geranyl diphosphate = (2E,6E)-farnesyl diphosphate + diphosphate. It functions in the pathway isoprenoid biosynthesis; geranyl diphosphate biosynthesis; geranyl diphosphate from dimethylallyl diphosphate and isopentenyl diphosphate: step 1/1. It participates in isoprenoid biosynthesis; farnesyl diphosphate biosynthesis; farnesyl diphosphate from geranyl diphosphate and isopentenyl diphosphate. Catalyzes the sequential condensations of isopentenyl pyrophosphate (IPP) with dimethylallyl diphosphate (DMAPP) to yield geranyl diphosphate (GPP) and with GPP to yield (2E,6E)-farnesyl diphosphate (E,E-FPP). This Mycobacterium tuberculosis (strain ATCC 25618 / H37Rv) protein is (2E,6E)-farnesyl diphosphate synthase.